Reading from the N-terminus, the 757-residue chain is Polymeric immunoglobulin receptor (757 aa).

A signal peptide spans 1–18 (MSRLFLACLLAIFPVVSM). The 108-residue stretch at 19-126 (KSPIFGPEEV…RGLNFDVSLE (108 aa)) folds into the Ig-like V-type 1; required for binding to polymeric IgA and IgM domain. Topologically, residues 19 to 632 (KSPIFGPEEV…TGYSGSSKAL (614 aa)) are extracellular. 7 disulfides stabilise this stretch: cysteine 40–cysteine 110, cysteine 56–cysteine 64, cysteine 152–cysteine 220, cysteine 257–cysteine 324, cysteine 271–cysteine 279, cysteine 370–cysteine 440, and cysteine 384–cysteine 394. Asparagine 83 carries an N-linked (GlcNAc...) asparagine glycan. Ig-like V-type domains are found at residues 145-237 (GRTV…DLQV), 250-341 (RSSV…VQAW), 353-457 (ASPS…LKVV), and 461-560 (PSLK…VYVA). 2 N-linked (GlcNAc...) asparagine glycosylation sites follow: asparagine 420 and asparagine 468. Intrachain disulfides connect cysteine 481–cysteine 543, cysteine 485–cysteine 519, and cysteine 495–cysteine 502. A disordered region spans residues 607–627 (KDAAGGPGAPADPGRPTGYSG). Residues 633 to 653 (VSTLVPLALVLVAGVVAIGVV) traverse the membrane as a helical segment. The Cytoplasmic portion of the chain corresponds to 654–757 (RARHRKNVDR…AATQNGPTEA (104 aa)). Residues serine 665, serine 674, serine 681, and serine 727 each carry the phosphoserine modification. Basic and acidic residues predominate over residues 679 to 688 (ENSRDFEGRD). Residues 679–730 (ENSRDFEGRDNMGASPEAQETSLGGKDEFATTTEDTVESKEPKKAKRSSKEE) form a disordered region.

In terms of assembly, interacts (mainly via CDR1-like domain) with dimeric IgA. Interacts (mainly via CDR2-like domain) with pentameric IgM. As to quaternary structure, either free or part of the secretory IgA (sIgA) complex that consists of two, four or five IgA monomers, and two additional non-Ig polypeptides, namely the JCHAIN and the secretory component (the proteolytic product of PIGR). Free secretory component interacts with bacterial antigens toxA of C.difficile and eae of E.coli. Post-translationally, in the absence of dimeric IgA, Ser-727 is phosphorylated which allows PIGR to function normally. N-glycosylated. N-glycosylation is required for anchoring IgA molecules to mucus, but is not necessary for Ig binding. In terms of tissue distribution, found in mammary gland, jejunum, lung, kidney and small intestine.

The protein localises to the cell membrane. The protein resides in the secreted. In terms of biological role, mediates selective transcytosis of polymeric IgA and IgM across mucosal epithelial cells. Binds polymeric IgA and IgM at the basolateral surface of epithelial cells. The complex is then transported across the cell to be secreted at the apical surface. During this process, a cleavage occurs that separates the extracellular (known as the secretory component) from the transmembrane segment. Functionally, through its N-linked glycans ensures anchoring of secretory IgA (sIgA) molecules to mucus lining the epithelial surface to neutralize extracellular pathogens. On its own (free form) may act as a non-specific microbial scavenger to prevent pathogen interaction with epithelial cells. The chain is Polymeric immunoglobulin receptor (PIGR) from Bos taurus (Bovine).